A 294-amino-acid chain; its full sequence is NAD kinase (294 aa).

Catalysis depends on D73, which acts as the Proton acceptor. NAD(+)-binding positions include 73 to 74, 147 to 148, R175, D177, and 188 to 193; these read DG, ND, and TAYALS.

The protein belongs to the NAD kinase family. The cofactor is a divalent metal cation.

Its subcellular location is the cytoplasm. It carries out the reaction NAD(+) + ATP = ADP + NADP(+) + H(+). Functionally, involved in the regulation of the intracellular balance of NAD and NADP, and is a key enzyme in the biosynthesis of NADP. Catalyzes specifically the phosphorylation on 2'-hydroxyl of the adenosine moiety of NAD to yield NADP. The sequence is that of NAD kinase from Nitrosospira multiformis (strain ATCC 25196 / NCIMB 11849 / C 71).